Reading from the N-terminus, the 344-residue chain is tRNA N6-adenosine threonylcarbamoyltransferase (344 aa).

2 residues coordinate Fe cation: His112 and His116. Substrate is bound by residues 134-138 (LASGG), Asp167, Gly180, and Asn280. A Fe cation-binding site is contributed by Asp308.

Belongs to the KAE1 / TsaD family. Fe(2+) serves as cofactor.

The protein resides in the cytoplasm. The enzyme catalyses L-threonylcarbamoyladenylate + adenosine(37) in tRNA = N(6)-L-threonylcarbamoyladenosine(37) in tRNA + AMP + H(+). Functionally, required for the formation of a threonylcarbamoyl group on adenosine at position 37 (t(6)A37) in tRNAs that read codons beginning with adenine. Is involved in the transfer of the threonylcarbamoyl moiety of threonylcarbamoyl-AMP (TC-AMP) to the N6 group of A37, together with TsaE and TsaB. TsaD likely plays a direct catalytic role in this reaction. The sequence is that of tRNA N6-adenosine threonylcarbamoyltransferase from Rickettsia conorii (strain ATCC VR-613 / Malish 7).